We begin with the raw amino-acid sequence, 343 residues long: Lipopolysaccharide core biosynthesis glycosyltransferase LpsD (343 aa).

It belongs to the glycosyltransferase group 1 family. Glycosyltransferase 4 subfamily.

It participates in bacterial outer membrane biogenesis; LPS core biosynthesis. The chain is Lipopolysaccharide core biosynthesis glycosyltransferase LpsD (lpsD) from Rhizobium meliloti (strain 1021) (Ensifer meliloti).